Consider the following 126-residue polypeptide: MSQMDPDAVSKAFVEHYYSTFDTNRVGLAGLYQEASMLTFEGQKIQGVQSIVAKLTSLPFQQCKHHISTVDCQPSGPASGMLVFVSGNLQLAGEEHALKFSQMFHLMPTPQGSFYVFNDIFRLNYA.

An N-acetylserine modification is found at S2. The 115-residue stretch at 9 to 123 folds into the NTF2 domain; sequence VSKAFVEHYY…FYVFNDIFRL (115 aa).

In terms of assembly, interacts with RAN1. As to expression, expressed in roots, stems, leaves and flowers, and, at low levels, in siliques.

The protein localises to the cytoplasm. Its subcellular location is the nucleus. The protein resides in the nucleus envelope. Facilitates protein transport into the nucleus. Interacts with various nucleoporins and with Ran-GDP. Could be part of a multicomponent system of cytosolic factors that assemble at the pore complex during nuclear import. This is Nuclear transport factor 2B from Arabidopsis thaliana (Mouse-ear cress).